Reading from the N-terminus, the 252-residue chain is Sulfoacetaldehyde reductase 2 (252 aa).

6–30 (LITGATSGFGRAAARRFADAGWSLI) contributes to the NADP(+) binding site. Ser-139 provides a ligand contact to substrate. Tyr-152 serves as the catalytic Proton acceptor.

It belongs to the short-chain dehydrogenases/reductases (SDR) family. As to quaternary structure, homodimer and heterotetramer.

The enzyme catalyses 2-hydroxyethane-1-sulfonate + NADP(+) = sulfoacetaldehyde + NADPH + H(+). It participates in organosulfur degradation. Catalyzes the formation of isethionate from 2-sulfoacetaldehyde in the deaminative pathway of taurine. Constitutively expressed enzyme that only mediates a small part of the activity observed in taurine-grown cells. This Chromohalobacter salexigens (strain ATCC BAA-138 / DSM 3043 / CIP 106854 / NCIMB 13768 / 1H11) protein is Sulfoacetaldehyde reductase 2 (isfD2).